The chain runs to 709 residues: Myotubularin-related protein 11 (709 aa).

Positions methionine 1–serine 39 are disordered. The Myotubularin phosphatase domain occupies methionine 196–tyrosine 639.

The protein belongs to the protein-tyrosine phosphatase family. Non-receptor class myotubularin subfamily. As to expression, expressed in bone marrow, spleen and thymus.

This chain is Myotubularin-related protein 11 (MTMR11), found in Homo sapiens (Human).